The following is a 161-amino-acid chain: Protein-export protein SecB (161 aa).

This sequence belongs to the SecB family. In terms of assembly, homotetramer, a dimer of dimers. One homotetramer interacts with 1 SecA dimer.

It localises to the cytoplasm. One of the proteins required for the normal export of preproteins out of the cell cytoplasm. It is a molecular chaperone that binds to a subset of precursor proteins, maintaining them in a translocation-competent state. It also specifically binds to its receptor SecA. The chain is Protein-export protein SecB from Rhodopseudomonas palustris (strain BisA53).